Reading from the N-terminus, the 330-residue chain is Succinylglutamate desuccinylase (330 aa).

Residues His-53, Glu-56, and His-147 each contribute to the Zn(2+) site. The active site involves Glu-210.

It belongs to the AspA/AstE family. Succinylglutamate desuccinylase subfamily. It depends on Zn(2+) as a cofactor.

It catalyses the reaction N-succinyl-L-glutamate + H2O = L-glutamate + succinate. It participates in amino-acid degradation; L-arginine degradation via AST pathway; L-glutamate and succinate from L-arginine: step 5/5. In terms of biological role, transforms N(2)-succinylglutamate into succinate and glutamate. In Yersinia enterocolitica serotype O:8 / biotype 1B (strain NCTC 13174 / 8081), this protein is Succinylglutamate desuccinylase.